A 428-amino-acid chain; its full sequence is Tryptophan synthase beta chain (428 aa).

At K92 the chain carries N6-(pyridoxal phosphate)lysine.

The protein belongs to the TrpB family. In terms of assembly, tetramer of two alpha and two beta chains. The cofactor is pyridoxal 5'-phosphate.

The catalysed reaction is (1S,2R)-1-C-(indol-3-yl)glycerol 3-phosphate + L-serine = D-glyceraldehyde 3-phosphate + L-tryptophan + H2O. The protein operates within amino-acid biosynthesis; L-tryptophan biosynthesis; L-tryptophan from chorismate: step 5/5. The beta subunit is responsible for the synthesis of L-tryptophan from indole and L-serine. In Leptothrix cholodnii (strain ATCC 51168 / LMG 8142 / SP-6) (Leptothrix discophora (strain SP-6)), this protein is Tryptophan synthase beta chain.